Here is an 819-residue protein sequence, read N- to C-terminus: Putative U-box domain-containing protein 53 (819 aa).

2 disordered regions span residues 208-309 and 398-433; these read TSDT…NPQF and KETEKFEQKRREEREAAQRREAEMKATHEAKEKEKL. The segment covering 223–237 has biased composition (low complexity); that stretch reads ERTSSSCSSGSGANS. Polar residues predominate over residues 238 to 260; it reads DVMSNALKSNPHTLSNKRMQNLP. Positions 278-296 are enriched in basic and acidic residues; sequence DETKKRSSDAAEEASKRSS. Residues 297 to 307 show a composition bias toward polar residues; it reads PETSRSVSWNP. Positions 395–437 form a coiled coil; that stretch reads IAKKETEKFEQKRREEREAAQRREAEMKATHEAKEKEKLEESS. The Protein kinase domain occupies 460 to 728; the sequence is FSEDLKIGMG…DLEDQILPVL (269 aa). ATP contacts are provided by residues 466 to 474 and Lys-487; that span reads IGMGAYGDV. Asp-582 functions as the Proton acceptor in the catalytic mechanism. The U-box domain maps to 748–819; sequence QPPSHFFCPL…AIVEWRNRNQ (72 aa).

Belongs to the protein kinase superfamily. Ser/Thr protein kinase family.

It catalyses the reaction L-seryl-[protein] + ATP = O-phospho-L-seryl-[protein] + ADP + H(+). The enzyme catalyses L-threonyl-[protein] + ATP = O-phospho-L-threonyl-[protein] + ADP + H(+). The catalysed reaction is S-ubiquitinyl-[E2 ubiquitin-conjugating enzyme]-L-cysteine + [acceptor protein]-L-lysine = [E2 ubiquitin-conjugating enzyme]-L-cysteine + N(6)-ubiquitinyl-[acceptor protein]-L-lysine.. It participates in protein modification; protein ubiquitination. In terms of biological role, functions as an E3 ubiquitin ligase. The polypeptide is Putative U-box domain-containing protein 53 (PUB53) (Arabidopsis thaliana (Mouse-ear cress)).